The chain runs to 229 residues: Putative germin-like protein 12-4 (229 aa).

A signal peptide spans 1 to 22 (MAASNFFLLTAFIALVATQAMA). Cys-32 and Cys-47 are oxidised to a cystine. One can recognise a Cupin type-1 domain in the interval 62–217 (ANLDKPMDTT…AFQVDKKAMD (156 aa)). Asn-78 carries N-linked (GlcNAc...) asparagine glycosylation. Mn(2+) contacts are provided by His-111, His-113, Glu-118, and His-162.

Belongs to the germin family. In terms of assembly, oligomer (believed to be a pentamer but probably hexamer).

Its subcellular location is the secreted. The protein localises to the extracellular space. It localises to the apoplast. In terms of biological role, may play a role in plant defense. Probably has no oxalate oxidase activity even if the active site is conserved. This is Putative germin-like protein 12-4 from Oryza sativa subsp. japonica (Rice).